The chain runs to 100 residues: ATP-dependent Clp protease adapter protein ClpS (100 aa).

The protein belongs to the ClpS family. Binds to the N-terminal domain of the chaperone ClpA.

Functionally, involved in the modulation of the specificity of the ClpAP-mediated ATP-dependent protein degradation. This chain is ATP-dependent Clp protease adapter protein ClpS, found in Corynebacterium glutamicum (strain R).